Reading from the N-terminus, the 185-residue chain is Ribosome-recycling factor (185 aa).

It belongs to the RRF family.

It is found in the cytoplasm. Functionally, responsible for the release of ribosomes from messenger RNA at the termination of protein biosynthesis. May increase the efficiency of translation by recycling ribosomes from one round of translation to another. This chain is Ribosome-recycling factor, found in Chromobacterium violaceum (strain ATCC 12472 / DSM 30191 / JCM 1249 / CCUG 213 / NBRC 12614 / NCIMB 9131 / NCTC 9757 / MK).